A 308-amino-acid polypeptide reads, in one-letter code: Transcription factor zip-2 (308 aa).

The segment covering 217–229 (QSSSSSTVETTIT) has biased composition (polar residues). Positions 217–277 (QSSSSSTVET…RESKEERERL (61 aa)) are disordered. A bZIP domain is found at 242–305 (SSDYRHKRDK…EDYKRLVMMF (64 aa)). A basic motif region spans residues 246–276 (RHKRDKNNLASQKSRQKRQAKIRESKEERER). Residues 266–277 (KIRESKEERERL) show a composition bias toward basic and acidic residues. Residues 277–291 (LEKRKVQLQAMVLTL) are leucine-zipper.

The protein belongs to the bZIP family. C/EBP subfamily. Expressed in the pharynx and throughout the intestine.

It is found in the nucleus. Transcription factor that binds to the promoter and the enhancer regions of target genes. May act together with the bZIP transcription factor, cebp-2. Involved in responding to mitochondrial damage. Plays a role in the delay of age-associated mitochondrial fragmentation and muscle decline. Has a protective role in response to infection by the Gram-negative bacterium P.aeruginosa. Required to prevent P.aeruginosa ToxA-mediated lethality. Required for the activation of several infection response genes including irg-1 and irg-2 following P.aeruginosa infection; target gene activation may involve effects of the bacterial toxin, ToxA, and perhaps other toxins. This Caenorhabditis elegans protein is Transcription factor zip-2.